Here is a 426-residue protein sequence, read N- to C-terminus: Serine--tRNA ligase (426 aa).

An L-serine-binding site is contributed by 227–229 (TSE). ATP-binding positions include 258–260 (RKE) and Val-274. Glu-281 provides a ligand contact to L-serine. 345-348 (ELTS) is an ATP binding site. Residue Thr-380 coordinates L-serine.

Belongs to the class-II aminoacyl-tRNA synthetase family. Type-1 seryl-tRNA synthetase subfamily. Homodimer. The tRNA molecule binds across the dimer.

It is found in the cytoplasm. It carries out the reaction tRNA(Ser) + L-serine + ATP = L-seryl-tRNA(Ser) + AMP + diphosphate + H(+). It catalyses the reaction tRNA(Sec) + L-serine + ATP = L-seryl-tRNA(Sec) + AMP + diphosphate + H(+). Its pathway is aminoacyl-tRNA biosynthesis; selenocysteinyl-tRNA(Sec) biosynthesis; L-seryl-tRNA(Sec) from L-serine and tRNA(Sec): step 1/1. Catalyzes the attachment of serine to tRNA(Ser). Is also able to aminoacylate tRNA(Sec) with serine, to form the misacylated tRNA L-seryl-tRNA(Sec), which will be further converted into selenocysteinyl-tRNA(Sec). This Clavibacter michiganensis subsp. michiganensis (strain NCPPB 382) protein is Serine--tRNA ligase.